The chain runs to 227 residues: Ribose-5-phosphate isomerase A (227 aa).

Substrate contacts are provided by residues 26-29 (TGST), 82-85 (DGAD), and 95-98 (KGGG). The active-site Proton acceptor is the Glu-104. Position 122 (Lys-122) interacts with substrate.

The protein belongs to the ribose 5-phosphate isomerase family. Homodimer.

The enzyme catalyses aldehydo-D-ribose 5-phosphate = D-ribulose 5-phosphate. Its pathway is carbohydrate degradation; pentose phosphate pathway; D-ribose 5-phosphate from D-ribulose 5-phosphate (non-oxidative stage): step 1/1. Functionally, catalyzes the reversible conversion of ribose-5-phosphate to ribulose 5-phosphate. This Streptococcus pyogenes serotype M5 (strain Manfredo) protein is Ribose-5-phosphate isomerase A.